Consider the following 346-residue polypeptide: Tetraacyldisaccharide 4'-kinase (346 aa).

54-61 is a binding site for ATP; the sequence is TVGGAGKT.

The protein belongs to the LpxK family.

The catalysed reaction is a lipid A disaccharide + ATP = a lipid IVA + ADP + H(+). It functions in the pathway glycolipid biosynthesis; lipid IV(A) biosynthesis; lipid IV(A) from (3R)-3-hydroxytetradecanoyl-[acyl-carrier-protein] and UDP-N-acetyl-alpha-D-glucosamine: step 6/6. Its function is as follows. Transfers the gamma-phosphate of ATP to the 4'-position of a tetraacyldisaccharide 1-phosphate intermediate (termed DS-1-P) to form tetraacyldisaccharide 1,4'-bis-phosphate (lipid IVA). This chain is Tetraacyldisaccharide 4'-kinase, found in Sinorhizobium fredii (strain NBRC 101917 / NGR234).